A 548-amino-acid chain; its full sequence is Probable 2,3-bisphosphoglycerate-independent phosphoglycerate mutase (548 aa).

Mn(2+)-binding residues include Asp-20 and Ser-73. Ser-73 acts as the Phosphoserine intermediate in catalysis. Residues His-134, 164 to 165, Arg-200, Arg-207, 279 to 282, and Lys-354 contribute to the substrate site; these read RD and RGDR. Mn(2+) is bound by residues Asp-422, His-426, Asp-463, His-464, and His-493.

Belongs to the BPG-independent phosphoglycerate mutase family. In terms of assembly, monomer. Mn(2+) serves as cofactor.

It carries out the reaction (2R)-2-phosphoglycerate = (2R)-3-phosphoglycerate. Its pathway is carbohydrate degradation; glycolysis; pyruvate from D-glyceraldehyde 3-phosphate: step 3/5. Catalyzes the interconversion of 2-phosphoglycerate and 3-phosphoglycerate. This is Probable 2,3-bisphosphoglycerate-independent phosphoglycerate mutase (gpmI) from Leptospira interrogans serogroup Icterohaemorrhagiae serovar Lai (strain 56601).